Here is a 113-residue protein sequence, read N- to C-terminus: Nitrogenase vanadium-iron protein delta chain (113 aa).

As to quaternary structure, hexamer of two alpha, two beta, and two delta chains. The cofactor is iron-sulfur cluster. Requires vanadium cation as cofactor.

The catalysed reaction is N2 + 8 reduced [2Fe-2S]-[ferredoxin] + 16 ATP + 16 H2O = H2 + 8 oxidized [2Fe-2S]-[ferredoxin] + 2 NH4(+) + 16 ADP + 16 phosphate + 6 H(+). The key enzymatic reactions in nitrogen fixation are catalyzed by the nitrogenase complex, which has 2 components: the iron protein (component 2) and a component 1 which is either a molybdenum-iron protein, a vanadium-iron, or an iron-iron protein. The polypeptide is Nitrogenase vanadium-iron protein delta chain (vnfG) (Azotobacter salinestris).